A 945-amino-acid chain; its full sequence is Isoleucine--tRNA ligase (945 aa).

The short motif at 66 to 76 is the 'HIGH' region element; the sequence is PYANGDIHLGH. Glutamate 581 provides a ligand contact to L-isoleucyl-5'-AMP. The short motif at 622 to 626 is the 'KMSKS' region element; that stretch reads KMSKS. Residue lysine 625 participates in ATP binding. Zn(2+) is bound by residues cysteine 908, cysteine 911, cysteine 928, and cysteine 931.

The protein belongs to the class-I aminoacyl-tRNA synthetase family. IleS type 1 subfamily. As to quaternary structure, monomer. It depends on Zn(2+) as a cofactor.

The protein resides in the cytoplasm. It carries out the reaction tRNA(Ile) + L-isoleucine + ATP = L-isoleucyl-tRNA(Ile) + AMP + diphosphate. Its function is as follows. Catalyzes the attachment of isoleucine to tRNA(Ile). As IleRS can inadvertently accommodate and process structurally similar amino acids such as valine, to avoid such errors it has two additional distinct tRNA(Ile)-dependent editing activities. One activity is designated as 'pretransfer' editing and involves the hydrolysis of activated Val-AMP. The other activity is designated 'posttransfer' editing and involves deacylation of mischarged Val-tRNA(Ile). This is Isoleucine--tRNA ligase from Paraburkholderia phytofirmans (strain DSM 17436 / LMG 22146 / PsJN) (Burkholderia phytofirmans).